A 218-amino-acid polypeptide reads, in one-letter code: Large ribosomal subunit protein uL4 (218 aa).

Positions 55 to 83 are disordered; sequence THATKTRGMVSGGGKKPWKQKGTGRARQG.

This sequence belongs to the universal ribosomal protein uL4 family. Part of the 50S ribosomal subunit.

Its function is as follows. One of the primary rRNA binding proteins, this protein initially binds near the 5'-end of the 23S rRNA. It is important during the early stages of 50S assembly. It makes multiple contacts with different domains of the 23S rRNA in the assembled 50S subunit and ribosome. In terms of biological role, forms part of the polypeptide exit tunnel. This Bifidobacterium longum (strain DJO10A) protein is Large ribosomal subunit protein uL4.